Consider the following 643-residue polypeptide: Probable extracellular metalloproteinase 4 (643 aa).

The signal sequence occupies residues 1–18; sequence MHGLLLAGLLALPLNVLA. A propeptide spanning residues 19–254 is cleaved from the precursor; that stretch reads HPTESHSSGV…VHSVVDYVSA (236 aa). Basic and acidic residues predominate over residues 47–57; the sequence is TKSDAVPKQDG. Positions 47–69 are disordered; sequence TKSDAVPKQDGESFTTSSTGDDN. Residues 58–69 are compositionally biased toward polar residues; the sequence is ESFTTSSTGDDN. 2 N-linked (GlcNAc...) asparagine glycosylation sites follow: asparagine 271 and asparagine 420. Histidine 437 contributes to the Zn(2+) binding site. The active site involves glutamate 438. Residue histidine 441 coordinates Zn(2+). N-linked (GlcNAc...) asparagine glycosylation is found at asparagine 603 and asparagine 629.

This sequence belongs to the peptidase M36 family. Zn(2+) is required as a cofactor.

It is found in the secreted. Secreted metalloproteinase probably acting as a virulence factor. The polypeptide is Probable extracellular metalloproteinase 4 (MEP4) (Arthroderma benhamiae (strain ATCC MYA-4681 / CBS 112371) (Trichophyton mentagrophytes)).